The chain runs to 336 residues: MRAPSMDRAAVARVGAVASASVCALVAGVVLAQYIFTLKRKTGRKTKIIEMMPEFQKSSVRIKNPTRVEEIICGLIKGGAAKLQIITDFDMTLSRFSYKGKRCPTCHNIIDNCKLVTDECRKKLLQLKEKYYAIEVDPVLTVEEKYPYMVEWYTKSHGLLVQQALPKAKLKEIVAESDVMLKEGYENFFDKLQQHSIPVFIFSAGIGDVLEEVIRQAGVYHPNVKVVSNFMDFDETGVLKGFKGELIHVFNKHDGALRNTEYFNQLKDNSNIILLGDSQGDLRMADGVANVEHILKIGYLNDRVDELLEKYMDSYDIVLVQDESLEVANSILQKIL.

Catalysis depends on Asp-88, which acts as the Nucleophile. Positions 88 and 90 each coordinate Mg(2+). Asp-90 functions as the Proton donor in the catalytic mechanism. A CMP-binding site is contributed by Glu-135. The N(7)-methyl-GMP site is built by Glu-135 and Ser-156. Substrate is bound by residues 203 to 204 (SA) and Lys-252. Asp-277 is a binding site for Mg(2+). Residue Ser-278 is modified to Phosphoserine.

This sequence belongs to the pyrimidine 5'-nucleotidase family. In terms of assembly, monomer. In terms of tissue distribution, isoforms 1, 3 and 4 are expressed in reticulocytes. Isoform 4 is hardly detectable in bone marrow and fetal liver.

It is found in the cytoplasm. It localises to the endoplasmic reticulum. It catalyses the reaction N(7)-methyl-GMP + H2O = N(7)-methylguanosine + phosphate. It carries out the reaction CMP + H2O = cytidine + phosphate. The catalysed reaction is a ribonucleoside 5'-phosphate + H2O = a ribonucleoside + phosphate. Functionally, nucleotidase which shows specific activity towards cytidine monophosphate (CMP) and 7-methylguanosine monophosphate (m(7)GMP). CMP seems to be the preferred substrate. This is Cytosolic 5'-nucleotidase 3A (NT5C3A) from Homo sapiens (Human).